Here is a 414-residue protein sequence, read N- to C-terminus: Poly(3-hydroxyalkanoate) depolymerase C (414 aa).

A signal peptide spans 1–37 (MLAKQIKKANSRSTLLRKSLLFAAPIILAVSSSSVYA). Catalysis depends on S154, which acts as the Charge relay system.

It belongs to the AB hydrolase superfamily. Lipase family.

It is found in the secreted. Functionally, specific for poly(hydroxyalkanoic acid) consisting of monomers of four or five carbon atoms and for P-nitrophenylbutyrate as substrates. This is Poly(3-hydroxyalkanoate) depolymerase C (phaZ1) from Paucimonas lemoignei (Pseudomonas lemoignei).